The sequence spans 139 residues: uncharacterized protein (139 aa).

A helical membrane pass occupies residues 77 to 97; it reads YCFFFFLVLFLNGIIATRGKA.

The protein resides in the mitochondrion membrane. This is an uncharacterized protein from Arabidopsis thaliana (Mouse-ear cress).